The sequence spans 498 residues: ATP synthase subunit beta, chloroplastic (498 aa).

An ATP-binding site is contributed by 172–179 (GGAGVGKT).

Belongs to the ATPase alpha/beta chains family. F-type ATPases have 2 components, CF(1) - the catalytic core - and CF(0) - the membrane proton channel. CF(1) has five subunits: alpha(3), beta(3), gamma(1), delta(1), epsilon(1). CF(0) has four main subunits: a(1), b(1), b'(1) and c(9-12).

Its subcellular location is the plastid. It is found in the chloroplast thylakoid membrane. The catalysed reaction is ATP + H2O + 4 H(+)(in) = ADP + phosphate + 5 H(+)(out). Produces ATP from ADP in the presence of a proton gradient across the membrane. The catalytic sites are hosted primarily by the beta subunits. This Solanum lycopersicum (Tomato) protein is ATP synthase subunit beta, chloroplastic.